A 192-amino-acid chain; its full sequence is Thymidine kinase (192 aa).

Residues 9–16 (STMNAGKS) and 87–90 (DEAQ) contribute to the ATP site. Glu88 serves as the catalytic Proton acceptor. Zn(2+)-binding residues include Cys145, Cys147, Cys182, and His185.

This sequence belongs to the thymidine kinase family. Homotetramer.

It is found in the cytoplasm. It catalyses the reaction thymidine + ATP = dTMP + ADP + H(+). This chain is Thymidine kinase, found in Pasteurella multocida (strain Pm70).